A 637-amino-acid chain; its full sequence is ATP-dependent zinc metalloprotease FtsH (637 aa).

Residues 1–6 lie on the Cytoplasmic side of the membrane; sequence MNNQGR. Residues 7–27 form a helical membrane-spanning segment; it reads SILAWAALFIFVILLFNVFQS. Topologically, residues 28–103 are periplasmic; that stretch reads DGLLGVRNNI…VVPLETRMNT (76 aa). A helical transmembrane segment spans residues 104–124; sequence FLGFLISWFPMLLLIGVWVFF. Residues 125–637 are Cytoplasmic-facing; that stretch reads MRQMHGGGKA…TKDKKENIIS (513 aa). 195–202 is a binding site for ATP; sequence GPPGTGKT. Residue His-417 coordinates Zn(2+). Residue Glu-418 is part of the active site. His-421 and Asp-495 together coordinate Zn(2+).

It in the central section; belongs to the AAA ATPase family. This sequence in the C-terminal section; belongs to the peptidase M41 family. In terms of assembly, homohexamer. It depends on Zn(2+) as a cofactor.

The protein localises to the cell inner membrane. Its function is as follows. Acts as a processive, ATP-dependent zinc metallopeptidase for both cytoplasmic and membrane proteins. Plays a role in the quality control of integral membrane proteins. The protein is ATP-dependent zinc metalloprotease FtsH of Rickettsia prowazekii (strain Madrid E).